The sequence spans 211 residues: MAPSRNGMILKPHFHKDWQRRVATWFNQPARKIRRRKARQARARRIAPRPAAGPIRPIVRCPTVRYHTKVRAGHGFSLEELRVAGIHKKVARTIGISVDPRRRNKSTESLQANVQRLKEYRSKLVLFPRKPSAPKKGDSSAEELKLATQLTGPVMPIRNVFKKEKARVITEEEKNFKAFASLRMARANAHLFGIRAKRAKEAAEQDVEKKK.

Position 16 is an N6-acetyllysine (lysine 16). Serine 77 and serine 106 each carry phosphoserine. Glycyl lysine isopeptide (Lys-Gly) (interchain with G-Cter in SUMO2) cross-links involve residues lysine 123 and lysine 145. Residue lysine 174 forms a Glycyl lysine isopeptide (Lys-Gly) (interchain with G-Cter in SUMO1); alternate linkage. Residues lysine 174 and lysine 177 each participate in a glycyl lysine isopeptide (Lys-Gly) (interchain with G-Cter in SUMO2); alternate cross-link. Residue lysine 177 is modified to N6-acetyllysine; alternate.

It belongs to the eukaryotic ribosomal protein eL13 family. In terms of assembly, component of the 60S large ribosomal subunit (LSU).

Its subcellular location is the cytoplasm. In terms of biological role, component of the ribosome, a large ribonucleoprotein complex responsible for the synthesis of proteins in the cell. The small ribosomal subunit (SSU) binds messenger RNAs (mRNAs) and translates the encoded message by selecting cognate aminoacyl-transfer RNA (tRNA) molecules. The large subunit (LSU) contains the ribosomal catalytic site termed the peptidyl transferase center (PTC), which catalyzes the formation of peptide bonds, thereby polymerizing the amino acids delivered by tRNAs into a polypeptide chain. The nascent polypeptides leave the ribosome through a tunnel in the LSU and interact with protein factors that function in enzymatic processing, targeting, and the membrane insertion of nascent chains at the exit of the ribosomal tunnel. As part of the LSU, it is probably required for its formation and the maturation of rRNAs. Plays a role in bone development. This is Large ribosomal subunit protein eL13 (RPL13) from Oryctolagus cuniculus (Rabbit).